Consider the following 539-residue polypeptide: Protein mushroom body miniature (539 aa).

Over residues 1–11 (MHNSGGQSGWN) the composition is skewed to polar residues. The disordered stretch occupies residues 1-345 (MHNSGGQSGW…EDDKKARKQK (345 aa)). Residues 67-79 (KFRDPQQELDNHQ) show a composition bias toward basic and acidic residues. A compositionally biased stretch (basic residues) spans 80–89 (PNKRGGRRNR). Residues 90 to 101 (GGGGGGGGWGGR) show a composition bias toward gly residues. A compositionally biased stretch (basic and acidic residues) spans 199–208 (IKKEKEMEHK). The segment covering 268-289 (VASTPKPKAVKPVSSSDSSTSD) has biased composition (low complexity). Ser-288 and Ser-290 each carry phosphoserine. Phosphothreonine occurs at positions 292 and 327. Residues 327-336 (TDEEESTEPE) show a composition bias toward acidic residues. Residue Ser-332 is modified to Phosphoserine. Residue Thr-333 is modified to Phosphothreonine. CCHC-type zinc fingers lie at residues 354-367 (CGIC…SFQC) and 371-386 (CRNC…NCPN). Positions 421 to 513 (VTAPVSAKPK…AASLPPQVFP (93 aa)) are disordered. Residues 428-447 (KPKKDKKASIKKIKKSSQKR) are compositionally biased toward basic residues. The span at 456–480 (DEEDDEEDDDEDEDDSSESDDSESS) shows a compositional bias: acidic residues.

In terms of processing, may be phosphorylated in vivo by CkIIalpha. mbm and CkIIalpha colocalize to the nucleolus and mbm is phosphorylated in vitro by CkIIalpha. In terms of tissue distribution, shows widespread expression in third instar larval brain with no apparent difference between males and females (at protein level). Detected at low levels in the mushroom body neuropil and is also expressed in many cells of the brain outside the mushroom body (at protein level). Not detected in third instar larval brain cells in anaphase (at protein level).

It localises to the nucleus. Its subcellular location is the nucleolus. It is found in the cytoplasm. Its function is as follows. Required for small ribosomal subunit biogenesis in neuroblasts. Plays a role in mushroom body development. In Drosophila melanogaster (Fruit fly), this protein is Protein mushroom body miniature.